We begin with the raw amino-acid sequence, 161 residues long: Large ribosomal subunit protein uL15 (161 aa).

Positions 1 to 57 (MRLKDAIPKKGSQQRGRRVGRGISAGQGASCGKGMRGQKSRSGGSTRPGFEGGQNPL) are disordered. Residues 23–35 (ISAGQGASCGKGM) show a composition bias toward gly residues.

The protein belongs to the universal ribosomal protein uL15 family. Part of the 50S ribosomal subunit.

Functionally, binds to the 23S rRNA. This chain is Large ribosomal subunit protein uL15, found in Trichodesmium erythraeum (strain IMS101).